A 24-amino-acid polypeptide reads, in one-letter code: Caerin-2.1 (24 aa).

Belongs to the frog skin active peptide (FSAP) family. Caerin subfamily. As to expression, expressed by the skin dorsal glands.

The protein resides in the secreted. Functionally, inhibits the formation of NO by neuronal nitric oxide synthase. The sequence is that of Caerin-2.1 from Litoria rothii (Roth's tree frog).